Here is a 140-residue protein sequence, read N- to C-terminus: Translation initiation factor 2 subunit beta (140 aa).

Belongs to the eIF-2-beta/eIF-5 family. In terms of assembly, heterotrimer composed of an alpha, a beta and a gamma chain.

Its function is as follows. eIF-2 functions in the early steps of protein synthesis by forming a ternary complex with GTP and initiator tRNA. The sequence is that of Translation initiation factor 2 subunit beta (eif2b) from Pyrococcus abyssi (strain GE5 / Orsay).